The following is a 339-amino-acid chain: Cathepsin B (339 aa).

Positions Met-1–Ala-17 are cleaved as a signal peptide. Positions Arg-18–Lys-79 are cleaved as a propeptide — activation peptide. Disulfide bonds link Cys-93–Cys-122, Cys-105–Cys-150, Cys-141–Cys-207, Cys-142–Cys-146, Cys-179–Cys-211, and Cys-187–Cys-198. Cys-108 is a catalytic residue. Asn-192 is a glycosylation site (N-linked (GlcNAc...) asparagine). At Lys-220 the chain carries N6-acetyllysine. Active-site residues include His-278 and Asn-298. Positions Gln-334 to Ile-339 are excised as a propeptide.

Belongs to the peptidase C1 family. In terms of assembly, dimer of a heavy chain and a light chain cross-linked by a disulfide bond. Interacts with SRPX2. Directly interacts with SHKBP1.

The protein localises to the lysosome. Its subcellular location is the melanosome. The protein resides in the secreted. It is found in the extracellular space. It localises to the apical cell membrane. The enzyme catalyses Hydrolysis of proteins with broad specificity for peptide bonds. Preferentially cleaves -Arg-Arg-|-Xaa bonds in small molecule substrates (thus differing from cathepsin L). In addition to being an endopeptidase, shows peptidyl-dipeptidase activity, liberating C-terminal dipeptides.. Its function is as follows. Thiol protease which is believed to participate in intracellular degradation and turnover of proteins. Cleaves matrix extracellular phosphoglycoprotein MEPE. Involved in the solubilization of cross-linked TG/thyroglobulin in the thyroid follicle lumen. Has also been implicated in tumor invasion and metastasis. The polypeptide is Cathepsin B (CTSB) (Macaca fascicularis (Crab-eating macaque)).